A 30-amino-acid polypeptide reads, in one-letter code: U-actitoxin-Bcg2a (30 aa).

An intrachain disulfide couples Cys-7 to Cys-27.

Its subcellular location is the secreted. The protein localises to the nematocyst. In terms of biological role, possible voltage-gated potassium channel (Kv) blocker. The polypeptide is U-actitoxin-Bcg2a (Bunodosoma cangicum (Sea anemone)).